The sequence spans 340 residues: Flavonoid 7-O-methyltransferase 1 (340 aa).

Asp-207 lines the S-adenosyl-L-methionine pocket. Catalysis depends on His-245, which acts as the Proton acceptor.

This sequence belongs to the class I-like SAM-binding methyltransferase superfamily. Cation-independent O-methyltransferase family. As to quaternary structure, homodimer. Expressed in leaves.

The enzyme catalyses (2S)-naringenin + S-adenosyl-L-methionine = (2S)-sakuranetin + S-adenosyl-L-homocysteine + H(+). The catalysed reaction is scutellarein + S-adenosyl-L-methionine = scutellarein 7-methyl ether + S-adenosyl-L-homocysteine. It catalyses the reaction apigenin + S-adenosyl-L-methionine = genkwanin + S-adenosyl-L-homocysteine + H(+). It carries out the reaction luteolin + S-adenosyl-L-methionine = luteolin 7-methyl ether + S-adenosyl-L-homocysteine + H(+). The enzyme catalyses chrysoeriol + S-adenosyl-L-methionine = velutin + S-adenosyl-L-homocysteine. The catalysed reaction is diosmetin + S-adenosyl-L-methionine = luteolin 4',7-dimethyl ether + S-adenosyl-L-homocysteine. It catalyses the reaction acacetin + S-adenosyl-L-methionine = apigenin 4',7-dimethyl ether + S-adenosyl-L-homocysteine. It carries out the reaction scutellarein 4'-methyl ether + S-adenosyl-L-methionine = ladanein + S-adenosyl-L-homocysteine. Its pathway is flavonoid metabolism. Functionally, flavonoid 7-O-methyltransferase involved in the biosynthesis of polymethoxylated flavonoids natural products such as nevadensin and salvigenin, aroma compounds which contribute to the flavor of sweet basil, and exhibit pharmacological activities such as anti-allergic, anti-oxidant, antibacterial, anti-proliferative, and anti-inflammatory effects. Catalyzes S-adenosylmethionine-dependent regioselective 7-O-methylation of flavonoids; active on various hydroxylated flavonoid substrates, including apigenin (API) and luteolin (LUT), and, with a lower efficiency, scutellarein (SCU), naringenin (NAR), chrysoeriol (CHRYS), diosmetin (DIOS), acacetin (ACA) and scutellarein-7-methyl ether (SCU7Me). The polypeptide is Flavonoid 7-O-methyltransferase 1 (Ocimum basilicum (Sweet basil)).